The following is a 151-amino-acid chain: Acidic phospholipase A2 6 (151 aa).

The signal sequence occupies residues 1–27 (MYPAHLLVLLAVCVSLLGAASIPARPL). 7 disulfides stabilise this stretch: Cys-38-Cys-104, Cys-54-Cys-151, Cys-56-Cys-72, Cys-71-Cys-132, Cys-78-Cys-125, Cys-88-Cys-118, and Cys-111-Cys-123. Ca(2+)-binding residues include Tyr-55, Gly-57, and Gly-59. Residue His-75 is part of the active site. Asp-76 serves as a coordination point for Ca(2+). Residue Asp-126 is part of the active site.

This sequence belongs to the phospholipase A2 family. Group I subfamily. D49 sub-subfamily. It depends on Ca(2+) as a cofactor. In terms of tissue distribution, expressed by the venom gland.

The protein localises to the secreted. The catalysed reaction is a 1,2-diacyl-sn-glycero-3-phosphocholine + H2O = a 1-acyl-sn-glycero-3-phosphocholine + a fatty acid + H(+). In terms of biological role, PLA2 catalyzes the calcium-dependent hydrolysis of the 2-acyl groups in 3-sn-phosphoglycerides. This chain is Acidic phospholipase A2 6, found in Tropidechis carinatus (Australian rough-scaled snake).